Here is a 197-residue protein sequence, read N- to C-terminus: Imidazoleglycerol-phosphate dehydratase (197 aa).

It belongs to the imidazoleglycerol-phosphate dehydratase family.

The protein resides in the cytoplasm. It carries out the reaction D-erythro-1-(imidazol-4-yl)glycerol 3-phosphate = 3-(imidazol-4-yl)-2-oxopropyl phosphate + H2O. The protein operates within amino-acid biosynthesis; L-histidine biosynthesis; L-histidine from 5-phospho-alpha-D-ribose 1-diphosphate: step 6/9. In Syntrophomonas wolfei subsp. wolfei (strain DSM 2245B / Goettingen), this protein is Imidazoleglycerol-phosphate dehydratase.